Consider the following 101-residue polypeptide: NADH-quinone oxidoreductase subunit K (101 aa).

3 helical membrane-spanning segments follow: residues 4–24 (LSHYLILGAVLFAISVVGIFL), 30–50 (IVLLMAIELMLLAVNLNFIAF), and 61–81 (VFVFFILTVAAAESAIGLAIL).

This sequence belongs to the complex I subunit 4L family. NDH-1 is composed of 14 different subunits. Subunits NuoA, H, J, K, L, M, N constitute the membrane sector of the complex.

It localises to the cell inner membrane. It catalyses the reaction a quinone + NADH + 5 H(+)(in) = a quinol + NAD(+) + 4 H(+)(out). Functionally, NDH-1 shuttles electrons from NADH, via FMN and iron-sulfur (Fe-S) centers, to quinones in the respiratory chain. The immediate electron acceptor for the enzyme in this species is believed to be ubiquinone. Couples the redox reaction to proton translocation (for every two electrons transferred, four hydrogen ions are translocated across the cytoplasmic membrane), and thus conserves the redox energy in a proton gradient. In Azoarcus sp. (strain BH72), this protein is NADH-quinone oxidoreductase subunit K.